Consider the following 246-residue polypeptide: tRNA pseudouridine synthase A (246 aa).

Residue aspartate 52 is the Nucleophile of the active site. Residue tyrosine 111 coordinates substrate.

This sequence belongs to the tRNA pseudouridine synthase TruA family. As to quaternary structure, homodimer.

The catalysed reaction is uridine(38/39/40) in tRNA = pseudouridine(38/39/40) in tRNA. Its function is as follows. Formation of pseudouridine at positions 38, 39 and 40 in the anticodon stem and loop of transfer RNAs. The sequence is that of tRNA pseudouridine synthase A from Fervidobacterium nodosum (strain ATCC 35602 / DSM 5306 / Rt17-B1).